The following is a 496-amino-acid chain: Glycine receptor subunit beta (496 aa).

Residues 1–22 (MKFSLAISFFILMSLLFEDACA) form the signal peptide. The Extracellular portion of the chain corresponds to 23-268 (KEKSSKKGKG…IFTLRRQVGF (246 aa)). A disordered region spans residues 32-53 (GKKKQYLCPSQQSPEDLARVPP). Asn54 carries an N-linked (GlcNAc...) asparagine glycan. Positions 108 and 174 each coordinate glycine. Cys183 and Cys197 are oxidised to a cystine. A glycan (N-linked (GlcNAc...) asparagine) is linked at Asn242. Cys243 and Cys255 are disulfide-bonded. Glycine is bound at residue Thr250. A helical membrane pass occupies residues 269 to 289 (YMMGVYAPTLLIVVLSWLSFW). Residues 290–294 (INPDA) are Cytoplasmic-facing. Residues 295-315 (SAARVPLGIFSVLSLASECTT) traverse the membrane as a helical segment. Over 316–327 (LAAELPKVSYVK) the chain is Extracellular. A helical membrane pass occupies residues 328–349 (ALDVWLIACLLFGFASLVEYAV). Residues 350–471 (VQVMLNNPKR…KPVIPTAAKR (122 aa)) are Cytoplasmic-facing. Thr391 bears the Phosphothreonine mark. A helical membrane pass occupies residues 472–495 (IDLYARALFPFCFLFFNVIYWSIY). Position 496 (Leu496) is a topological domain, extracellular.

The protein belongs to the ligand-gated ion channel (TC 1.A.9) family. Glycine receptor (TC 1.A.9.3) subfamily. GLRB sub-subfamily. As to quaternary structure, forms heteropentamers with glycin receptor alpha subunits. Heteropentamers with GLRA1 can be composed of two GLRA1 and three GLRB subunits, or three GLRA1 and two GLRB subunits, or four GLRA1 subunits and one GLRB subunit. Forms heteropentamers with GLRA2. Functional GLRB-GLRA2 heteropentamers contain four GLRA2 subunits and one GLRB subunit, although alternative subunit composition cannot be excluded. Forms a heteropentamer with GLRA3. Interacts with GPHN. In terms of tissue distribution, detected in spinal cord, brain and brain stem, especially in the periolivary region, spinal nuclei, trigeminal nucleus, medulla oblongata, pons and midbrain. Detected in the inner plexiform layer of the retina (at protein level). High levels of expression in cortex, hippocampus, thalamus and cerebellum. Detected in spinal cord.

It is found in the postsynaptic cell membrane. Its subcellular location is the synapse. It localises to the cell projection. The protein localises to the dendrite. The protein resides in the cell membrane. It is found in the cytoplasm. The catalysed reaction is chloride(in) = chloride(out). Channel opening is triggered by extracellular glycine. Heteropentameric channels composed of GLRB and GLRA1 are activated by lower glycine levels than homopentameric GLRA1. Functionally, subunit of heteromeric glycine-gated chloride channels. Plays an important role in the down-regulation of neuronal excitability. Contributes to the generation of inhibitory postsynaptic currents. This Mus musculus (Mouse) protein is Glycine receptor subunit beta (Glrb).